A 126-amino-acid polypeptide reads, in one-letter code: Aspartate 1-decarboxylase (126 aa).

The active-site Schiff-base intermediate with substrate; via pyruvic acid is the S25. A Pyruvic acid (Ser) modification is found at S25. T57 contacts substrate. Catalysis depends on Y58, which acts as the Proton donor. 73–75 is a substrate binding site; that stretch reads GAA.

The protein belongs to the PanD family. Heterooctamer of four alpha and four beta subunits. Requires pyruvate as cofactor. In terms of processing, is synthesized initially as an inactive proenzyme, which is activated by self-cleavage at a specific serine bond to produce a beta-subunit with a hydroxyl group at its C-terminus and an alpha-subunit with a pyruvoyl group at its N-terminus.

The protein resides in the cytoplasm. The catalysed reaction is L-aspartate + H(+) = beta-alanine + CO2. It participates in cofactor biosynthesis; (R)-pantothenate biosynthesis; beta-alanine from L-aspartate: step 1/1. Functionally, catalyzes the pyruvoyl-dependent decarboxylation of aspartate to produce beta-alanine. This is Aspartate 1-decarboxylase from Yersinia pestis bv. Antiqua (strain Antiqua).